A 162-amino-acid polypeptide reads, in one-letter code: Large ribosomal subunit protein uL30 (162 aa).

Belongs to the universal ribosomal protein uL30 family. As to quaternary structure, part of the 50S ribosomal subunit.

The sequence is that of Large ribosomal subunit protein uL30 from Staphylothermus marinus (strain ATCC 43588 / DSM 3639 / JCM 9404 / F1).